Consider the following 520-residue polypeptide: Membrane-bound glycerophospholipid O-acyltransferase 2 (520 aa).

The next 6 membrane-spanning stretches (helical) occupy residues 22-42, 61-81, 88-108, 184-204, 237-257, and 264-284; these read PIDQVNFVVCQLFALLAAIWF, TLLGLYLALFCFGWYALHFLV, CIMIIIGVENMHNYCFVFALG, FMGILAGPLCSYKDYITFIEG, LLVCGLSLLFHLTICTTLPVE, and FQATASWPTKIIYLYISLLAA. Catalysis depends on residues Asn342 and His373. The next 3 membrane-spanning stretches (helical) occupy residues 366–386, 416–436, and 444–464; these read FILSAIWHGVYPGYYLTFLTG, VITWIVTQVAISYTVVPFVLL, and FYSSWYYCLHILGILVLLLLP.

This sequence belongs to the membrane-bound acyltransferase family. Expressed in neutrophils.

Its subcellular location is the endoplasmic reticulum membrane. It carries out the reaction a 1-acyl-sn-glycero-3-phosphocholine + an acyl-CoA = a 1,2-diacyl-sn-glycero-3-phosphocholine + CoA. The enzyme catalyses a 1-acyl-sn-glycero-3-phosphoethanolamine + an acyl-CoA = a 1,2-diacyl-sn-glycero-3-phosphoethanolamine + CoA. It catalyses the reaction a 1-acyl-sn-glycero-3-phosphate + an acyl-CoA = a 1,2-diacyl-sn-glycero-3-phosphate + CoA. The catalysed reaction is (9Z)-hexadecenoyl-CoA + 1-hexadecanoyl-sn-glycero-3-phosphocholine = 1-hexadecanoyl-2-(9Z-hexadecenoyl)-sn-glycero-3-phosphocholine + CoA. It carries out the reaction 1-hexadecanoyl-sn-glycero-3-phosphoethanolamine + (9Z)-octadecenoyl-CoA = 1-hexadecanoyl-2-(9Z-octadecenoyl)-sn-glycero-3-phosphoethanolamine + CoA. The enzyme catalyses 1-hexadecanoyl-sn-glycero-3-phosphoethanolamine + (9Z)-hexadecenoyl-CoA = 1-hexadecanoyl-2-(9Z)-hexadecenoyl-sn-glycero-3-phosphoethanolamine + CoA. It catalyses the reaction 1-(9Z-octadecenoyl)-sn-glycero-3-phospho-L-serine + hexadecanoyl-CoA = 1-(9Z)-octadecenoyl-2-hexadecanoyl-sn-glycero-3-phosphoserine + CoA. The catalysed reaction is (9Z,12Z)-octadecadienoyl-CoA + 1-hexadecanoyl-sn-glycero-3-phosphocholine = 1-hexadecanoyl-2-(9Z,12Z-octadecadienoyl)-sn-glycero-3-phosphocholine + CoA. It carries out the reaction 1-hexadecanoyl-sn-glycero-3-phosphocholine + (9Z)-octadecenoyl-CoA = 1-hexadecanoyl-2-(9Z-octadecenoyl)-sn-glycero-3-phosphocholine + CoA. The enzyme catalyses 1-hexadecanoyl-sn-glycero-3-phosphate + (9Z)-hexadecenoyl-CoA = 1-hexadecanoyl-2-[(9Z)-hexadec-9-enoyl]-sn-glycero-3-phosphate + CoA. It catalyses the reaction 1-hexadecanoyl-sn-glycero-3-phosphate + (9Z)-octadecenoyl-CoA = 1-hexadecanoyl-2-(9Z-octadecenoyl)-sn-glycero-3-phosphate + CoA. The catalysed reaction is a 1-O-(1Z-alkenyl)-sn-glycero-3-phosphocholine + (9Z)-octadecenoyl-CoA = 1-O-(1Z)-alkenyl-2-(9Z)-octadecenoyl-sn-glycero-3-phosphocholine + CoA. It carries out the reaction a 1-O-(1Z-alkenyl)-sn-glycero-3-phosphoethanolamine + (9Z)-octadecenoyl-CoA = 1-O-(1Z)-alkenyl-2-(9Z)-octadecenoyl-sn-glycero-3-phosphoethanolamine + CoA. The enzyme catalyses 1-octadecanoyl-sn-glycero-3-phosphoethanolamine + (9Z)-octadecenoyl-CoA = 1-octadecanoyl-2-(9Z-octadecenoyl)-sn-glycero-3-phosphoethanolamine + CoA. It catalyses the reaction 1-octadecanoyl-sn-glycero-3-phosphocholine + (9Z)-octadecenoyl-CoA = 1-octadecanoyl-2-(9Z-octadecenoyl)-sn-glycero-3-phosphocholine + CoA. The catalysed reaction is 1-(9Z-octadecenoyl)-sn-glycero-3-phosphoethanolamine + (9Z)-octadecenoyl-CoA = 1,2-di-(9Z-octadecenoyl)-sn-glycero-3-phosphoethanolamine + CoA. It functions in the pathway lipid metabolism; phospholipid metabolism. With respect to regulation, partially inhibited by thimerosal. Functionally, acyltransferase which catalyzes the transfer of an acyl group from an acyl-CoA to a lysophospholipid leading to the production of a phospholipid and participates in the reacylation step of the phospholipid remodeling pathway also known as the Lands cycle. Catalyzes preferentially the acylation of lysophosphatidylethanolamine (1-acyl-sn-glycero-3-phosphoethanolamine or LPE) and lysophosphatidic acid (LPA) and to a lesser extend lysophosphatidylcholine (LPC) and lysophosphatidylserine (LPS). Prefers oleoyl-CoA as the acyl donor. May be involved in chondrocyte differentiation. This Homo sapiens (Human) protein is Membrane-bound glycerophospholipid O-acyltransferase 2.